Here is a 125-residue protein sequence, read N- to C-terminus: MTIFQGRATRKPSGGKLRPNHSKRRYELGREPTLTRLGDRELRKIRSYGGNSKFALLRCDYANVYNPKDKTTRKVKINTVKENSADPHYVQRNIMNRGTVISTELGDARITSRPGQDGVINAVLL.

A disordered region spans residues 1-30; sequence MTIFQGRATRKPSGGKLRPNHSKRRYELGR.

Belongs to the eukaryotic ribosomal protein eS8 family. Part of the 30S ribosomal subunit.

This chain is Small ribosomal subunit protein eS8, found in Picrophilus torridus (strain ATCC 700027 / DSM 9790 / JCM 10055 / NBRC 100828 / KAW 2/3).